The sequence spans 777 residues: 1,4-alpha-glucan branching enzyme GlgB (777 aa).

Residue Asp408 is the Nucleophile of the active site. Residue Glu461 is the Proton donor of the active site.

It belongs to the glycosyl hydrolase 13 family. GlgB subfamily. As to quaternary structure, monomer.

The catalysed reaction is Transfers a segment of a (1-&gt;4)-alpha-D-glucan chain to a primary hydroxy group in a similar glucan chain.. It participates in glycan biosynthesis; glycogen biosynthesis. Its function is as follows. Catalyzes the formation of the alpha-1,6-glucosidic linkages in glycogen by scission of a 1,4-alpha-linked oligosaccharide from growing alpha-1,4-glucan chains and the subsequent attachment of the oligosaccharide to the alpha-1,6 position. This Actinobacillus pleuropneumoniae serotype 7 (strain AP76) protein is 1,4-alpha-glucan branching enzyme GlgB.